We begin with the raw amino-acid sequence, 787 residues long: DNA ligase (787 aa).

NAD(+)-binding positions include Asp32 to Asp36, Ser81 to Leu82, and Glu121. Lys123 serves as the catalytic N6-AMP-lysine intermediate. Residues Arg144, Glu181, Lys297, and Lys321 each contribute to the NAD(+) site. Zn(2+) is bound by residues Cys415, Cys418, Cys445, and Cys451. The region spanning Val703–Asp787 is the BRCT domain.

The protein belongs to the NAD-dependent DNA ligase family. LigA subfamily. Mg(2+) serves as cofactor. Mn(2+) is required as a cofactor.

It carries out the reaction NAD(+) + (deoxyribonucleotide)n-3'-hydroxyl + 5'-phospho-(deoxyribonucleotide)m = (deoxyribonucleotide)n+m + AMP + beta-nicotinamide D-nucleotide.. Its function is as follows. DNA ligase that catalyzes the formation of phosphodiester linkages between 5'-phosphoryl and 3'-hydroxyl groups in double-stranded DNA using NAD as a coenzyme and as the energy source for the reaction. It is essential for DNA replication and repair of damaged DNA. The protein is DNA ligase of Pseudomonas savastanoi pv. phaseolicola (strain 1448A / Race 6) (Pseudomonas syringae pv. phaseolicola (strain 1448A / Race 6)).